Reading from the N-terminus, the 155-residue chain is Ribosomal RNA large subunit methyltransferase H (155 aa).

S-adenosyl-L-methionine-binding positions include Leu-72, Gly-103, and 122-127 (LSDLTL).

It belongs to the RNA methyltransferase RlmH family. Homodimer.

It localises to the cytoplasm. The enzyme catalyses pseudouridine(1915) in 23S rRNA + S-adenosyl-L-methionine = N(3)-methylpseudouridine(1915) in 23S rRNA + S-adenosyl-L-homocysteine + H(+). In terms of biological role, specifically methylates the pseudouridine at position 1915 (m3Psi1915) in 23S rRNA. The polypeptide is Ribosomal RNA large subunit methyltransferase H (Paracidovorax citrulli (strain AAC00-1) (Acidovorax citrulli)).